Consider the following 175-residue polypeptide: Large ribosomal subunit protein uL10 (175 aa).

Belongs to the universal ribosomal protein uL10 family. In terms of assembly, part of the ribosomal stalk of the 50S ribosomal subunit. The N-terminus interacts with L11 and the large rRNA to form the base of the stalk. The C-terminus forms an elongated spine to which L12 dimers bind in a sequential fashion forming a multimeric L10(L12)X complex.

Functionally, forms part of the ribosomal stalk, playing a central role in the interaction of the ribosome with GTP-bound translation factors. The sequence is that of Large ribosomal subunit protein uL10 from Prochlorococcus marinus (strain MIT 9211).